Consider the following 1135-residue polypeptide: LRR receptor-like serine/threonine-protein kinase RGI2 (1135 aa).

A signal peptide spans 1 to 35 (MSLQMPIPRKKALTVSHFSITLSLFLAFFISSTSA). Topologically, residues 36-723 (STNEVSALIS…QRGVHSHRLR (688 aa)) are extracellular. C69 and C76 are joined by a disulfide. 2 N-linked (GlcNAc...) asparagine glycosylation sites follow: N101 and N117. LRR repeat units lie at residues 105-129 (FTSL…IGDC), 130-153 (SELI…LGKL), 154-177 (KNLQ…LGDC), and 179-203 (SLKN…KIST). Short sequence motifs (small peptide recognition) lie at residues 186 to 187 (FD), 208 to 211 (RAGG), 231 to 236 (VLGLAA), and Y259. 19 LRR repeats span residues 226–250 (CRNL…LGQL), 251–274 (SKLQ…LGNC), 276–298 (ELIN…LGKL), 299–323 (QNLE…GFMK), 325–345 (LNAI…SFGN), 346–370 (LSNL…LSNC), 372–395 (KLVQ…GLLK), 397–418 (LNIF…LAGC), 419–442 (QNLQ…LFQL), 444–466 (NLTK…IGNC), 467–490 (TSLV…IGFL), 491–514 (QNLS…ISNC), 516–538 (QLQM…LSSL), 539–562 (TKLQ…LGHL), 564–586 (SLNR…LGHC), 587–610 (TNLQ…LFDI), 612–634 (DLDI…RISA), 635–658 (LNRL…LSGL), and 659–683 (ENLV…VFRQ). Residue N273 is glycosylated (N-linked (GlcNAc...) asparagine). The short motif at 281-283 (FLY) is the Small peptide recognition element. The Small peptide recognition signature appears at 329–332 (DLSM). N345 carries N-linked (GlcNAc...) asparagine glycosylation. Positions 351-353 (ELM) match the Small peptide recognition motif. N358 and N369 each carry an N-linked (GlcNAc...) asparagine glycan. Short sequence motifs (small peptide recognition) lie at residues 399-403 (IFLGW) and 425-428 (DLSQ). N444 carries N-linked (GlcNAc...) asparagine glycosylation. The Small peptide recognition signature appears at 447–451 (KLLLI). The N-linked (GlcNAc...) asparagine glycan is linked to N465. Residues 471–473 (RLR) carry the Small peptide recognition motif. Residues N492, N502, N521, and N524 are each glycosylated (N-linked (GlcNAc...) asparagine). 2 N-linked (GlcNAc...) asparagine glycosylation sites follow: N598 and N618. 2 N-linked (GlcNAc...) asparagine glycosylation sites follow: N665 and N707. The chain crosses the membrane as a helical span at residues 724–744 (IAIGLLISVTAVLAVLGVLAV). The Cytoplasmic portion of the chain corresponds to 745–1135 (IRAKQMIRDD…ATSNVRPNLK (391 aa)). A Phosphothreonine modification is found at T777. Residues 785–1066 (LVEGNVIGKG…KDVAAMLSEI (282 aa)) form the Protein kinase domain. ATP-binding positions include 791–799 (IGKGCSGIV) and K813. Phosphotyrosine is present on residues Y868 and Y907. D920 serves as the catalytic Proton acceptor. Phosphotyrosine occurs at positions 963 and 970. Residues 1077-1135 (DGCSGSCNNGRERGKDDSTSSVMQQTAKYLRSSSTSFSASSLLYSSSSSATSNVRPNLK) form a disordered region. Positions 1108-1128 (SSSTSFSASSLLYSSSSSATS) are enriched in low complexity.

Belongs to the protein kinase superfamily. Ser/Thr protein kinase family. In terms of assembly, binds to RGF peptides such as RGF1, GLV5/CLEL1/RGF2, GLV7/CLEL3/RGF3, GLV3/RGF4, GLV10/CLEL7/RGF5 and RGF10/CLELN; these interactions trigger the formation of heterodimers with SERK1. Interacts with UBP13. Phosphorylated and ubiquitinated upon interaction with RGF1, thus leading to activation a subsequent degradation. Stabilized by UBP12 and UBP13-mediated deubiquitination. In terms of processing, autophosphorylated. As to expression, specific to root meristems, especially in lateral root meristems (LRM).

Its subcellular location is the membrane. It carries out the reaction L-seryl-[protein] + ATP = O-phospho-L-seryl-[protein] + ADP + H(+). The enzyme catalyses L-threonyl-[protein] + ATP = O-phospho-L-threonyl-[protein] + ADP + H(+). Its function is as follows. Together with RGI1, RGI3, RGI4 and RGI5, acts as a receptor of RGF peptides (e.g. RGF1, GLV5/CLEL1/RGF2, GLV7/CLEL3/RGF3, GLV3/RGF4, GLV10/CLEL7/RGF5 and RGF10/CLELN), peptide hormones which maintain the postembryonic root stem cell niche by regulating the expression levels and patterns of the transcription factor PLETHORA (PLT, e.g. PLT1 and PLT2). Links RGF peptides signal with their downstream components. This chain is LRR receptor-like serine/threonine-protein kinase RGI2, found in Arabidopsis thaliana (Mouse-ear cress).